A 284-amino-acid chain; its full sequence is MFDPKSLDSGSRSILTMKNRLVSWAWALTLMYMLVSLILPIGALLQKSSQESVSEFVSIATAPVAMSAYAVTLSSALIAALLNGVFGLLIAWVLVRYEFPGRRLLDAAVDLPFALPTSVAGLTLATVYSDQGWIGTWLSSLNIQVAFTRLGVMLAMLFVSFPFVVRTLQPVLQDMERELEEAAWSLGASPFNTFLRVLCPPLMPAMMTGIALAFSRAVGEYGSVVIVSGNIPFQDLIAPVLIFQRLEQYDYSGATVIGTVVLLISLTLLLAINWIQASNRKFLG.

7 helical membrane-spanning segments follow: residues 25–45 (AWALTLMYMLVSLILPIGALL), 75–95 (SALIAALLNGVFGLLIAWVLV), 107–127 (AAVDLPFALPTSVAGLTLATV), 145–165 (VAFTRLGVMLAMLFVSFPFVV), 194–214 (FLRVLCPPLMPAMMTGIALAF), 223–243 (SVVIVSGNIPFQDLIAPVLIF), and 255–275 (TVIGTVVLLISLTLLLAINWI). The ABC transmembrane type-1 domain maps to 69–272 (YAVTLSSALI…LISLTLLLAI (204 aa)).

Belongs to the binding-protein-dependent transport system permease family. CysTW subfamily.

The protein localises to the plastid. It is found in the chloroplast membrane. Functionally, part of the ABC transporter complex cysAWTP (TC 3.A.1.6.1) involved in sulfate/thiosulfate import. Probably responsible for the translocation of the substrate across the membrane. This chain is Probable sulfate transport system permease protein cysT (cysT), found in Nephroselmis olivacea (Green alga).